The following is a 266-amino-acid chain: Translation initiation factor 2 subunit alpha (266 aa).

In terms of domain architecture, S1 motif spans 12-83 (GEILIATVKQ…RKGTVDVSLK (72 aa)).

It belongs to the eIF-2-alpha family. As to quaternary structure, heterotrimer composed of an alpha, a beta and a gamma chain.

In terms of biological role, eIF-2 functions in the early steps of protein synthesis by forming a ternary complex with GTP and initiator tRNA. This is Translation initiation factor 2 subunit alpha from Saccharolobus islandicus (strain M.16.27) (Sulfolobus islandicus).